The sequence spans 490 residues: Allantoin permease (490 aa).

A run of 12 helical transmembrane segments spans residues 36-56 (IWMG…LIAI), 60-80 (PWQV…ALAL), 116-136 (AIMW…ILLL), 151-171 (ILGI…IHLL), 190-210 (LVYL…GGLG), 225-245 (TFWP…TLIL), 265-285 (FYGL…VTSG), 308-328 (YVIV…NVAA), 350-370 (GSFI…MESA), 373-393 (VYAF…VMMA), 425-445 (AFAA…VPVL), and 448-468 (LYDI…IVLM).

It belongs to the purine-cytosine permease (2.A.39) family.

The protein localises to the cell membrane. It carries out the reaction (S)-allantoin(in) + H(+)(in) = (S)-allantoin(out) + H(+)(out). Its function is as follows. Uptake of allantoin into the cell. Allantoin uptake is not dependent on sodium, and PucI is likely to be a proton-coupled symporter. Shows highest recognition for binding of allantoin, good recognition for binding of hydantoin, L-5-benzylhydantoin and 5-hydroxyhydantoin, and to a lesser extent for a range of nucleobases and nucleosides. This is Allantoin permease from Bacillus subtilis (strain 168).